The chain runs to 181 residues: UPF0316 protein Bcer98_2136 (181 aa).

3 consecutive transmembrane segments (helical) span residues 6 to 26, 32 to 52, and 58 to 78; these read LIFVLQIIYVPVLTIRTILLV, SAAGVGLLEGAIYIISLGIVF, and WMNIVAYIIGFSAGLLLGGYI.

It belongs to the UPF0316 family.

The protein resides in the cell membrane. This chain is UPF0316 protein Bcer98_2136, found in Bacillus cytotoxicus (strain DSM 22905 / CIP 110041 / 391-98 / NVH 391-98).